The primary structure comprises 391 residues: Tryptophan synthase beta chain (391 aa).

K86 bears the N6-(pyridoxal phosphate)lysine mark.

It belongs to the TrpB family. In terms of assembly, tetramer of two alpha and two beta chains. Requires pyridoxal 5'-phosphate as cofactor.

The catalysed reaction is (1S,2R)-1-C-(indol-3-yl)glycerol 3-phosphate + L-serine = D-glyceraldehyde 3-phosphate + L-tryptophan + H2O. The protein operates within amino-acid biosynthesis; L-tryptophan biosynthesis; L-tryptophan from chorismate: step 5/5. Its function is as follows. The beta subunit is responsible for the synthesis of L-tryptophan from indole and L-serine. This chain is Tryptophan synthase beta chain, found in Vibrio metschnikovii.